The following is a 164-amino-acid chain: HTH-type transcriptional regulator PapX (164 aa).

An HTH marR-type domain is found at glutamate 25–alanine 159.

It is found in the cytoplasm. The sequence is that of HTH-type transcriptional regulator PapX (papX) from Escherichia coli.